Here is a 376-residue protein sequence, read N- to C-terminus: DNA-directed RNA polymerase subunit alpha (376 aa).

Residues methionine 1–aspartate 259 are alpha N-terminal domain (alpha-NTD). An alpha C-terminal domain (alpha-CTD) region spans residues lysine 276–glycine 376.

The protein belongs to the RNA polymerase alpha chain family. As to quaternary structure, homodimer. The RNAP catalytic core consists of 2 alpha, 1 beta, 1 beta' and 1 omega subunit. When a sigma factor is associated with the core the holoenzyme is formed, which can initiate transcription.

The enzyme catalyses RNA(n) + a ribonucleoside 5'-triphosphate = RNA(n+1) + diphosphate. Functionally, DNA-dependent RNA polymerase catalyzes the transcription of DNA into RNA using the four ribonucleoside triphosphates as substrates. The sequence is that of DNA-directed RNA polymerase subunit alpha from Chlamydia felis (strain Fe/C-56) (Chlamydophila felis).